A 399-amino-acid polypeptide reads, in one-letter code: Methylthioribose kinase (399 aa).

ATP-binding positions include Asn40, Lys57, and Glu111–Leu113. Asp229 lines the substrate pocket. Asp246–Glu248 contributes to the ATP binding site. A substrate-binding site is contributed by Arg344.

This sequence belongs to the methylthioribose kinase family. As to quaternary structure, homodimer.

The catalysed reaction is 5-(methylsulfanyl)-D-ribose + ATP = 5-(methylsulfanyl)-alpha-D-ribose 1-phosphate + ADP + H(+). It functions in the pathway amino-acid biosynthesis; L-methionine biosynthesis via salvage pathway; S-methyl-5-thio-alpha-D-ribose 1-phosphate from S-methyl-5'-thioadenosine (hydrolase route): step 2/2. Functionally, catalyzes the phosphorylation of methylthioribose into methylthioribose-1-phosphate. The sequence is that of Methylthioribose kinase from Citrobacter koseri (strain ATCC BAA-895 / CDC 4225-83 / SGSC4696).